The primary structure comprises 325 residues: Protein ORANGE-ORANGE, chloroplastic (325 aa).

The transit peptide at 1-54 (MDRVLVASYPINHLIRPHSFRIDYCWSTCFTSRLNSGKERQKLSSRWRWRSMAS) directs the protein to the chloroplast. The segment covering 53-71 (ASDSTDSSSSSSFAPSVES) has biased composition (low complexity). The disordered stretch occupies residues 53–77 (ASDSTDSSSSSSFAPSVESDPSDKT). A run of 2 helical transmembrane segments spans residues 164–184 (LYYV…GLLA) and 217–237 (IVAS…VVEV). The CR-type-like stretch occupies residues 226 to 317 (VGVISALMVV…CTGMAMASEH (92 aa)). The stretch at 248-255 (CKYCLGTG) is one CXXCXGXG motif repeat. A CXXCXXXG motif repeat occupies 259 to 266 (CARCSNTG). Residues 292–299 (CQNCSGSG) form a CXXCXGXG motif repeat. Residues 303–310 (CPTCLCTG) form a CXXCXXXG motif repeat.

The protein belongs to the orange-like family.

It is found in the plastid. The protein resides in the chloroplast membrane. In terms of biological role, triggers accumulation of carotenoids, mainly beta-carotene, in fruit flesh. The chain is Protein ORANGE-ORANGE, chloroplastic from Cucumis melo (Muskmelon).